The sequence spans 280 residues: Probable aquaporin PIP2-8 (280 aa).

Residues 1 to 21 form a disordered region; sequence MAAGSGSGSNPKDYQDPPPAP. 2 helical membrane passes run 36-56 and 70-92; these read AAIA…STVI and LGIA…GISG. Residues 96 to 98 carry the NPA 1 motif; that stretch reads NPA. 3 helical membrane-spanning segments follow: residues 113 to 135, 156 to 176, and 192 to 212; these read RAAL…ARAM, SAGA…YTVF, and VLAP…TIPI. The NPA 2 motif lies at 218–220; the sequence is NPA. The helical transmembrane segment at 236–256 threads the bilayer; sequence AWSHLWIFWVGPFAGAAAAMI.

Belongs to the MIP/aquaporin (TC 1.A.8) family. PIP (TC 1.A.8.11) subfamily. In terms of tissue distribution, expressed in leaves and at lower levels in roots.

It localises to the cell membrane. In terms of biological role, aquaporins facilitate the transport of water and small neutral solutes across cell membranes. The chain is Probable aquaporin PIP2-8 (PIP2-8) from Oryza sativa subsp. japonica (Rice).